Consider the following 237-residue polypeptide: Octopine transport system permease protein OccQ (237 aa).

The ABC transmembrane type-1 domain occupies 22–222; the sequence is TGMTVAVASS…LITFISGQAF (201 aa). Helical transmembrane passes span 24–44, 72–92, 96–116, and 201–221; these read MTVA…CLGA, LVIY…GSLF, GFVS…VSAA, and FSFY…SGQA.

It belongs to the binding-protein-dependent transport system permease family. HisMQ subfamily.

It localises to the cell inner membrane. Functionally, component of the octopine active transport system probably consisting of four subunits: Q, M, P and T. The protein is Octopine transport system permease protein OccQ (occQ) of Rhizobium meliloti (Ensifer meliloti).